The sequence spans 671 residues: Bifunctional acetylxylan esterase/xylanase XynS20E (671 aa).

Residues 1–19 form the signal peptide; sequence MRLGVALSTIAVLLTATSA. The tract at residues 54–279 is acetylxylan esterase; it reads QGAGRDIHVY…IQDIWDFVSQ (226 aa). The active-site Charge relay system is the Ser152. The N-linked (GlcNAc...) asparagine glycan is linked to Asn238. Residues 285–328 are disordered; the sequence is PVSASGNGGGNTTPTNPSTGGNGNGNGGGNTTPTNPSTGGNGNG. Gly residues predominate over residues 304–314; the sequence is GGNGNGNGGGN. CBM10 domains lie at 335–374 and 383–422; these read KCSSNITKQGYKCCASNCEVVYTDSDGDWGVENDQWCGCG and TCSAKILQQGYKCCPSGCIIYYTDEDGTWGVNGEEWCGCG. An N-linked (GlcNAc...) asparagine glycan is attached at Asn339. Residues Asn445 and Asn483 are each glycosylated (N-linked (GlcNAc...) asparagine). The GH11 domain maps to 461-661; that stretch reads TVTSNKVGDI…NNGGTSGTAD (201 aa). Catalysis depends on Glu555, which acts as the Nucleophile. The active-site Proton donor is the Glu648.

The protein in the N-terminal section; belongs to the axeA family. This sequence in the C-terminal section; belongs to the glycosyl hydrolase 11 (cellulase G) family.

It localises to the secreted. The catalysed reaction is Deacetylation of xylans and xylo-oligosaccharides.. It catalyses the reaction Endohydrolysis of (1-&gt;4)-beta-D-xylosidic linkages in xylans.. The protein operates within glycan degradation; xylan degradation. Bifunctional acetylxylan esterase/xylanase involved in the hydrolysis of xylan, a major structural heterogeneous polysaccharide found in plant biomass representing the second most abundant polysaccharide in the biosphere, after cellulose. Degrades xylan from acetylxylan, beechwood, birchwood, and oat spelt, and releases acetate from 4-methylumbelliferyl acetate and beta-D-xylose tetraacetate. No activity is observed against carboxy methyl cellulose, beta-glucan, p-nitrophenol acetate, p-nitrophenol laurate, p-nitrophenol myristate, p-nitrophenol, palmitate, or beta-naphthol acetate. The sequence is that of Bifunctional acetylxylan esterase/xylanase XynS20E (xynS20E) from Neocallimastix patriciarum (Rumen fungus).